A 405-amino-acid polypeptide reads, in one-letter code: Tryptophan synthase beta chain (405 aa).

Lysine 96 bears the N6-(pyridoxal phosphate)lysine mark.

This sequence belongs to the TrpB family. In terms of assembly, tetramer of two alpha and two beta chains. The cofactor is pyridoxal 5'-phosphate.

It carries out the reaction (1S,2R)-1-C-(indol-3-yl)glycerol 3-phosphate + L-serine = D-glyceraldehyde 3-phosphate + L-tryptophan + H2O. The protein operates within amino-acid biosynthesis; L-tryptophan biosynthesis; L-tryptophan from chorismate: step 5/5. In terms of biological role, the beta subunit is responsible for the synthesis of L-tryptophan from indole and L-serine. The chain is Tryptophan synthase beta chain from Clostridium botulinum (strain Alaska E43 / Type E3).